The following is a 507-amino-acid chain: ATP synthase subunit alpha, chloroplastic (507 aa).

Residue 170-177 (GDRQTGKT) coordinates ATP.

This sequence belongs to the ATPase alpha/beta chains family. In terms of assembly, F-type ATPases have 2 components, CF(1) - the catalytic core - and CF(0) - the membrane proton channel. CF(1) has five subunits: alpha(3), beta(3), gamma(1), delta(1), epsilon(1). CF(0) has four main subunits: a, b, b' and c.

The protein resides in the plastid. The protein localises to the chloroplast thylakoid membrane. The enzyme catalyses ATP + H2O + 4 H(+)(in) = ADP + phosphate + 5 H(+)(out). Produces ATP from ADP in the presence of a proton gradient across the membrane. The alpha chain is a regulatory subunit. The sequence is that of ATP synthase subunit alpha, chloroplastic from Dioscorea elephantipes (Elephant's foot yam).